The sequence spans 330 residues: Aspartate--ammonia ligase (330 aa).

It belongs to the class-II aminoacyl-tRNA synthetase family. AsnA subfamily.

It localises to the cytoplasm. It carries out the reaction L-aspartate + NH4(+) + ATP = L-asparagine + AMP + diphosphate + H(+). It functions in the pathway amino-acid biosynthesis; L-asparagine biosynthesis; L-asparagine from L-aspartate (ammonia route): step 1/1. In Serratia proteamaculans (strain 568), this protein is Aspartate--ammonia ligase.